Here is a 420-residue protein sequence, read N- to C-terminus: Anaerobic glycerol-3-phosphate dehydrogenase subunit B (420 aa).

It belongs to the anaerobic G-3-P dehydrogenase subunit B family. Composed of a catalytic GlpA/B dimer and of membrane bound GlpC. FMN is required as a cofactor.

It catalyses the reaction a quinone + sn-glycerol 3-phosphate = dihydroxyacetone phosphate + a quinol. It participates in polyol metabolism; glycerol degradation via glycerol kinase pathway; glycerone phosphate from sn-glycerol 3-phosphate (anaerobic route): step 1/1. In terms of biological role, conversion of glycerol 3-phosphate to dihydroxyacetone. Uses fumarate or nitrate as electron acceptor. This chain is Anaerobic glycerol-3-phosphate dehydrogenase subunit B, found in Pectobacterium carotovorum subsp. carotovorum (strain PC1).